The following is a 56-amino-acid chain: Repressor-like protein SSo7c4 (56 aa).

In terms of domain architecture, SpoVT-AbrB spans 4–51 (EEIVKVSRNYQVTIPAKVRQKFQIKEGDLVKVTFDESGGVVKIQLLDS).

The protein is Repressor-like protein SSo7c4 of Saccharolobus solfataricus (strain ATCC 35092 / DSM 1617 / JCM 11322 / P2) (Sulfolobus solfataricus).